Here is a 355-residue protein sequence, read N- to C-terminus: Carbohydrate sulfotransferase 10 (355 aa).

The Cytoplasmic portion of the chain corresponds to 1–6; the sequence is MHHRWL. The chain crosses the membrane as a helical; Signal-anchor for type II membrane protein span at residues 7–27; the sequence is LLVACFWVLFMLMVASKLITL. Topologically, residues 28–355 are lumenal; that stretch reads TMKDPEGYGN…FGYKEPTFLF (328 aa). Residues Asn-93 and Asn-98 are each glycosylated (N-linked (GlcNAc...) asparagine). 3'-phosphoadenylyl sulfate-binding positions include 126–132 and 188–196; these read PKVGNTQ and RDPFERLIS. Asn-316 is a glycosylation site (N-linked (GlcNAc...) asparagine).

The protein belongs to the sulfotransferase 2 family.

The protein localises to the golgi apparatus membrane. In terms of biological role, catalyzes the transfer of sulfate to position 3 of terminal glucuronic acid of both protein- and lipid-linked oligosaccharides. Participates in biosynthesis of HNK-1 carbohydrate structure, a sulfated glucuronyl-lactosaminyl residue carried by many neural recognition molecules. The chain is Carbohydrate sulfotransferase 10 (chst10) from Xenopus laevis (African clawed frog).